A 395-amino-acid polypeptide reads, in one-letter code: Elongation factor Tu (395 aa).

A tr-type G domain is found at 10 to 205; the sequence is KPHVNIGTIG…VDNWIPIPPR (196 aa). A G1 region spans residues 19 to 26; it reads GHVDHGKT. 19-26 is a GTP binding site; that stretch reads GHVDHGKT. Threonine 26 is a Mg(2+) binding site. A G2 region spans residues 60 to 64; it reads GITIN. Positions 81–84 are G3; that stretch reads DCPG. Residues 81–85 and 136–139 contribute to the GTP site; these read DCPGH and NKVD. The tract at residues 136 to 139 is G4; the sequence is NKVD. The G5 stretch occupies residues 174–176; that stretch reads SAL.

It belongs to the TRAFAC class translation factor GTPase superfamily. Classic translation factor GTPase family. EF-Tu/EF-1A subfamily. Monomer.

Its subcellular location is the cytoplasm. It carries out the reaction GTP + H2O = GDP + phosphate + H(+). Its function is as follows. GTP hydrolase that promotes the GTP-dependent binding of aminoacyl-tRNA to the A-site of ribosomes during protein biosynthesis. The protein is Elongation factor Tu of Hymenobacter ocellatus (Parahymenobacter ocellatus).